A 281-amino-acid polypeptide reads, in one-letter code: Small ribosomal subunit protein uS3 (281 aa).

Residues 38 to 106 (IRRLLSTGLE…QVQLNILEVK (69 aa)) form the KH type-2 domain. Residues 218-281 (APAGAERARR…VTHEPQIAES (64 aa)) are disordered. Residues 238 to 256 (SGAAGTTVTGTDAGRAVGG) show a composition bias toward low complexity.

This sequence belongs to the universal ribosomal protein uS3 family. Part of the 30S ribosomal subunit. Forms a tight complex with proteins S10 and S14.

Its function is as follows. Binds the lower part of the 30S subunit head. Binds mRNA in the 70S ribosome, positioning it for translation. The chain is Small ribosomal subunit protein uS3 from Mycobacterium leprae (strain Br4923).